We begin with the raw amino-acid sequence, 486 residues long: Serine/threonine-protein phosphatase 2A 56 kDa regulatory subunit alpha isoform (486 aa).

Serine 2 bears the N-acetylserine mark. The disordered stretch occupies residues aspartate 22–glutamate 52. A compositionally biased stretch (basic residues) spans lysine 27 to arginine 37. Low complexity predominate over residues serine 38–alanine 51. A phosphoserine mark is found at serine 41, serine 42, and serine 49.

Belongs to the phosphatase 2A regulatory subunit B56 family. In terms of assembly, PP2A consists of a common heterodimeric core enzyme, composed of a 36 kDa catalytic subunit (subunit C) and a 65 kDa constant regulatory subunit (PR65 or subunit A), that associates with a variety of regulatory subunits. Proteins that associate with the core dimer include three families of regulatory subunits B (the R2/B/PR55/B55, R3/B''/PR72/PR130/PR59 and R5/B'/B56 families), the 48 kDa variable regulatory subunit, viral proteins, and cell signaling molecules. Interacts with SGO1. Widely expressed with highest levels in thymus and ovary.

It is found in the cytoplasm. The protein resides in the nucleus. It localises to the chromosome. Its subcellular location is the centromere. Functionally, the B regulatory subunit might modulate substrate selectivity and catalytic activity, and might also direct the localization of the catalytic enzyme to a particular subcellular compartment. This is Serine/threonine-protein phosphatase 2A 56 kDa regulatory subunit alpha isoform (Ppp2r5a) from Mus musculus (Mouse).